The sequence spans 306 residues: MNARHFLSMMDYTPDELLGLIRRGVELKDLRIRGELFEPLKNRVLGMIFEKSSTRTRLSFEAGMIQLGGQAIFLSHRDTQLGRGEPIADSAKVMSRMLDAVMIRTYAHSNLTEFAANSRVPVINGLSDDLHPCQLLADMQTFLEHRGSIKGKTVAWIGDGNNMCNSYIEAAIQFDFQLRVACPAGYEPNPEFLALAGERVTIVRDPKAAVAGAHLVSTDVWTSMGQEEETARRMALFAPFQVTRASLDLAEKDVLFMHCLPAHRGEEISVDLLDDSRSVAWDQAENRLHAQKALLEFLVAPSHQRA.

Carbamoyl phosphate is bound by residues 53 to 56 (STRT), Gln-80, Arg-104, and 131 to 134 (HPCQ). L-ornithine contacts are provided by residues Asn-162, Asp-219, and 223 to 224 (SM). Residues 259 to 260 (CL) and Arg-287 each bind carbamoyl phosphate.

This sequence belongs to the aspartate/ornithine carbamoyltransferase superfamily. OTCase family. As to quaternary structure, homotrimer.

Its subcellular location is the cytoplasm. It catalyses the reaction carbamoyl phosphate + L-ornithine = L-citrulline + phosphate + H(+). Its pathway is amino-acid biosynthesis; L-arginine biosynthesis; L-arginine from L-ornithine and carbamoyl phosphate: step 1/3. With respect to regulation, reversibly inhibited by inhibited by phaseolotoxin and octicidine. Its function is as follows. Reversibly catalyzes the transfer of the carbamoyl group from carbamoyl phosphate (CP) to the N(epsilon) atom of ornithine (ORN) to produce L-citrulline, which is a substrate for argininosuccinate synthetase, the enzyme involved in the final step in arginine biosynthesis. The protein is Ornithine carbamoyltransferase 1, anabolic of Pseudomonas savastanoi pv. phaseolicola (Pseudomonas syringae pv. phaseolicola).